We begin with the raw amino-acid sequence, 457 residues long: Bifunctional protein GlmU (457 aa).

Residues 1-230 are pyrophosphorylase; it reads MPLSLPLHIV…AREVEGVNDL (230 aa). Residues 12-15, K26, Q78, 83-84, 105-107, G140, E155, N170, and N228 contribute to the UDP-N-acetyl-alpha-D-glucosamine site; these read LAAG, GT, and YGD. Mg(2+) is bound at residue D107. N228 provides a ligand contact to Mg(2+). A linker region spans residues 231–251; that stretch reads WQLTQLERAWQIRAARALCLQ. Residues 252-457 form an N-acetyltransferase region; it reads GARVADPARL…DSWQRPKKKT (206 aa). UDP-N-acetyl-alpha-D-glucosamine-binding residues include R334 and K352. H364 acts as the Proton acceptor in catalysis. The UDP-N-acetyl-alpha-D-glucosamine site is built by Y367 and N378. Acetyl-CoA contacts are provided by residues A381, 387-388, S406, A424, and R441; that span reads NY.

This sequence in the N-terminal section; belongs to the N-acetylglucosamine-1-phosphate uridyltransferase family. In the C-terminal section; belongs to the transferase hexapeptide repeat family. Homotrimer. The cofactor is Mg(2+).

It localises to the cytoplasm. It catalyses the reaction alpha-D-glucosamine 1-phosphate + acetyl-CoA = N-acetyl-alpha-D-glucosamine 1-phosphate + CoA + H(+). The enzyme catalyses N-acetyl-alpha-D-glucosamine 1-phosphate + UTP + H(+) = UDP-N-acetyl-alpha-D-glucosamine + diphosphate. It participates in nucleotide-sugar biosynthesis; UDP-N-acetyl-alpha-D-glucosamine biosynthesis; N-acetyl-alpha-D-glucosamine 1-phosphate from alpha-D-glucosamine 6-phosphate (route II): step 2/2. Its pathway is nucleotide-sugar biosynthesis; UDP-N-acetyl-alpha-D-glucosamine biosynthesis; UDP-N-acetyl-alpha-D-glucosamine from N-acetyl-alpha-D-glucosamine 1-phosphate: step 1/1. It functions in the pathway bacterial outer membrane biogenesis; LPS lipid A biosynthesis. Catalyzes the last two sequential reactions in the de novo biosynthetic pathway for UDP-N-acetylglucosamine (UDP-GlcNAc). The C-terminal domain catalyzes the transfer of acetyl group from acetyl coenzyme A to glucosamine-1-phosphate (GlcN-1-P) to produce N-acetylglucosamine-1-phosphate (GlcNAc-1-P), which is converted into UDP-GlcNAc by the transfer of uridine 5-monophosphate (from uridine 5-triphosphate), a reaction catalyzed by the N-terminal domain. This chain is Bifunctional protein GlmU, found in Xylella fastidiosa (strain 9a5c).